We begin with the raw amino-acid sequence, 190 residues long: NADH dehydrogenase [ubiquinone] iron-sulfur protein 3 (190 aa).

The protein belongs to the complex I 30 kDa subunit family. Complex I is composed of about 45 different subunits. This is a component of the iron-sulfur (IP) fragment of the enzyme.

Its subcellular location is the mitochondrion inner membrane. It catalyses the reaction a ubiquinone + NADH + 5 H(+)(in) = a ubiquinol + NAD(+) + 4 H(+)(out). Core subunit of the mitochondrial membrane respiratory chain NADH dehydrogenase (Complex I) that is believed to belong to the minimal assembly required for catalysis. Complex I functions in the transfer of electrons from NADH to the respiratory chain. The immediate electron acceptor for the enzyme is believed to be ubiquinone. The polypeptide is NADH dehydrogenase [ubiquinone] iron-sulfur protein 3 (NAD9) (Oryza sativa subsp. japonica (Rice)).